A 327-amino-acid chain; its full sequence is MDSDAAQKTWELENNIQTLPSCDEIFRYDAEQQRQIIDAKPWEKDPHFFKDIKISALALLKMVMHARSGGTLEVMGLMLGKVEDNTMIVMDAFALPVEGTETRVNAQAQAYEYMTAYMEAAKEVGRMEHAVGWYHSHPGYGCWLSGIDVSTQMLNQTYQEPFVAIVVDPVRTVSAGKVCLGAFRTYPKGYKPPNEEPSEYQTIPLNKIEDFGVHCKQYYPLEISYFKSALDRRLLDSLWNKYWVNTLGSSGLLTNTEYTTGQIMDLSEKLEQSENFLGRGTDVNEKRSEDKLSKATRDCSRSTIELIHGLMAQIVKDKLFNKVGLGK.

The MPN domain occupies 52 to 189 (IKISALALLK…LGAFRTYPKG (138 aa)). Zn(2+) contacts are provided by His135, His137, and Asp148. The JAMM motif motif lies at 135-148 (HSHPGYGCWLSGID). 2 positions are modified to phosphoserine: Ser300 and Ser302. A Phosphothreonine modification is found at Thr303.

It belongs to the peptidase M67A family. CSN5 subfamily. Component of the CSN complex, probably composed of CSN1b, alien/CSN2, CSN3, CSN4, CSN5, CSN6, CSN7 and CSN8. Interacts directly with CSN2. Also exists as monomeric form. Interacts via its MPN domain with Trc8. A divalent metal cation serves as cofactor. In terms of tissue distribution, expressed in the optic lobe neuropil.

The protein localises to the cytoplasm. It localises to the nucleus. Functionally, probable protease subunit of the COP9 signalosome complex (CSN), a complex involved in various cellular and developmental processes. The CSN complex is an essential regulator of the ubiquitin (Ubl) conjugation pathway by mediating the deneddylation of the cullin subunits of the SCF-type E3 ligase complexes, leading to decrease the Ubl ligase activity of SCF. In the complex, it probably acts as the catalytic center that mediates the cleavage of Nedd8 from cullins. It however has no metalloprotease activity by itself and requires the other subunits of the CSN complex. The CSN complex plays an essential role in oogenesis and embryogenesis and is required for proper photoreceptor R cell differentiation and promote lamina glial cell migration or axon targeting. It also promotes Ubl-dependent degradation of cyclin E (CycE) during early oogenesis. Also involved in regulation of axis formation by checkpoint-dependent, translational control of Gurken. In Drosophila melanogaster (Fruit fly), this protein is COP9 signalosome complex subunit 5 (CSN5).